The sequence spans 519 residues: Aspartokinase (519 aa).

The residue at position 326 (serine 326) is a Phosphoserine. Threonine 328 is modified (phosphothreonine). The ACT domain occupies 436–518 (LVGKHMRNTT…MLVEKPWLYS (83 aa)).

It belongs to the aspartokinase family.

It carries out the reaction L-aspartate + ATP = 4-phospho-L-aspartate + ADP. It participates in amino-acid biosynthesis; L-methionine biosynthesis via de novo pathway; L-homoserine from L-aspartate: step 1/3. Its pathway is amino-acid biosynthesis; L-threonine biosynthesis; L-threonine from L-aspartate: step 1/5. Phosphorylates aspartate, the first step in the biosynthesis of amino acids that derive from aspartate (the aspartate family of amino acids), including methioinine and threonine, the latter of which is a precursor to isoleucine. This is Aspartokinase from Schizosaccharomyces pombe (strain 972 / ATCC 24843) (Fission yeast).